A 203-amino-acid polypeptide reads, in one-letter code: MKDLTDKQQAVLAFITAIIKERGFPPTIREIGDEFGITAKGAYDHLKAIEKKGYLKTAKNQSRAIELIRQSPMESLPVQATSIPVIGQVAAGLPIFAEENIESYIPVPDEMAKGNVPMYALRVQGDSMIEVGINDGDIAIIEKRDIARNGEIVVALIEDEATLKVYYKEQDQIRLEARNPKYKPIKTKKATVMGKLIGLYRIY.

Positions 28-47 (IREIGDEFGITAKGAYDHLK) form a DNA-binding region, H-T-H motif. Active-site for autocatalytic cleavage activity residues include S127 and K164.

It belongs to the peptidase S24 family. Homodimer.

The catalysed reaction is Hydrolysis of Ala-|-Gly bond in repressor LexA.. In terms of biological role, represses a number of genes involved in the response to DNA damage (SOS response), including recA and lexA. In the presence of single-stranded DNA, RecA interacts with LexA causing an autocatalytic cleavage which disrupts the DNA-binding part of LexA, leading to derepression of the SOS regulon and eventually DNA repair. The protein is LexA repressor of Leptospira interrogans serogroup Icterohaemorrhagiae serovar copenhageni (strain Fiocruz L1-130).